The chain runs to 327 residues: Apoptosis facilitator Bcl-2-like protein 14 (327 aa).

At Ser-44 the chain carries Phosphoserine. The BH3 motif lies at Ile-212 to Lys-226. A BH2 motif is present at residues Trp-308 to Trp-315.

This sequence belongs to the Bcl-2 family. Phosphorylated by MELK, leading to inhibit its pro-apoptotic function. Isoform 1 is widely expressed. Isoform 2 is testis-specific.

Its subcellular location is the cytoplasm. It localises to the cytosol. It is found in the endomembrane system. Its function is as follows. Plays a role in apoptosis. The protein is Apoptosis facilitator Bcl-2-like protein 14 (BCL2L14) of Homo sapiens (Human).